The following is a 215-amino-acid chain: Thiamine import ATP-binding protein ThiQ (215 aa).

The 214-residue stretch at 2-215 (IYLNNVILND…GQISQLQKGV (214 aa)) folds into the ABC transporter domain. 32–39 (GESGAGKS) is an ATP binding site.

It belongs to the ABC transporter superfamily. Thiamine importer (TC 3.A.1.19.1) family. As to quaternary structure, the complex is composed of two ATP-binding proteins (ThiQ), two transmembrane proteins (ThiP) and a solute-binding protein (ThiB).

Its subcellular location is the cell inner membrane. It catalyses the reaction thiamine(out) + ATP + H2O = thiamine(in) + ADP + phosphate + H(+). Functionally, part of the ABC transporter complex ThiBPQ involved in thiamine import. Responsible for energy coupling to the transport system. The protein is Thiamine import ATP-binding protein ThiQ of Haemophilus influenzae (strain ATCC 51907 / DSM 11121 / KW20 / Rd).